A 196-amino-acid polypeptide reads, in one-letter code: Protein TEX261 (196 aa).

The next 5 helical transmembrane spans lie at Phe3–Val23, Ser42–Phe62, Ile70–Ile90, Phe97–Glu117, and Val125–Ser145.

This sequence belongs to the SVP26 family.

The protein resides in the membrane. The chain is Protein TEX261 (TEX261) from Pongo abelii (Sumatran orangutan).